We begin with the raw amino-acid sequence, 294 residues long: Undecaprenyl-diphosphatase (294 aa).

Transmembrane regions (helical) follow at residues 39-59, 93-113, 123-143, 198-218, 232-252, and 268-288; these read PGAA…ILYF, ATLG…GFTL, NLWI…VVDA, SFLM…VKAV, PTLV…IGFL, and IGLA…AIDP.

This sequence belongs to the UppP family.

It is found in the cell membrane. It carries out the reaction di-trans,octa-cis-undecaprenyl diphosphate + H2O = di-trans,octa-cis-undecaprenyl phosphate + phosphate + H(+). Catalyzes the dephosphorylation of undecaprenyl diphosphate (UPP). Confers resistance to bacitracin. This is Undecaprenyl-diphosphatase from Bifidobacterium longum subsp. infantis (strain ATCC 15697 / DSM 20088 / JCM 1222 / NCTC 11817 / S12).